Reading from the N-terminus, the 317-residue chain is Transaldolase (317 aa).

The active-site Schiff-base intermediate with substrate is the Lys126.

The protein belongs to the transaldolase family. Type 1 subfamily. In terms of assembly, homodimer.

Its subcellular location is the cytoplasm. The catalysed reaction is D-sedoheptulose 7-phosphate + D-glyceraldehyde 3-phosphate = D-erythrose 4-phosphate + beta-D-fructose 6-phosphate. It functions in the pathway carbohydrate degradation; pentose phosphate pathway; D-glyceraldehyde 3-phosphate and beta-D-fructose 6-phosphate from D-ribose 5-phosphate and D-xylulose 5-phosphate (non-oxidative stage): step 2/3. Its function is as follows. Transaldolase is important for the balance of metabolites in the pentose-phosphate pathway. In Burkholderia cenocepacia (strain ATCC BAA-245 / DSM 16553 / LMG 16656 / NCTC 13227 / J2315 / CF5610) (Burkholderia cepacia (strain J2315)), this protein is Transaldolase.